Reading from the N-terminus, the 738-residue chain is DNA topoisomerase 4 subunit A (738 aa).

The region spanning 32–496 is the Topo IIA-type catalytic domain; the sequence is LPDVRDGLKP…SFEEVTLTNQ (465 aa). Catalysis depends on Tyr-120, which acts as the O-(5'-phospho-DNA)-tyrosine intermediate.

Belongs to the type II topoisomerase GyrA/ParC subunit family. ParC type 1 subfamily. As to quaternary structure, heterotetramer composed of ParC and ParE.

It localises to the cell membrane. It carries out the reaction ATP-dependent breakage, passage and rejoining of double-stranded DNA.. Functionally, topoisomerase IV is essential for chromosome segregation. It relaxes supercoiled DNA. Performs the decatenation events required during the replication of a circular DNA molecule. In Rickettsia conorii (strain ATCC VR-613 / Malish 7), this protein is DNA topoisomerase 4 subunit A.